A 212-amino-acid chain; its full sequence is Large ribosomal subunit protein uL3 (212 aa).

Residues 136–155 (THGNSLSHRSNGSIGQNQTP) form a disordered region. Gln-153 bears the N5-methylglutamine mark.

It belongs to the universal ribosomal protein uL3 family. Part of the 50S ribosomal subunit. Forms a cluster with proteins L14 and L19. Post-translationally, methylated by PrmB.

Functionally, one of the primary rRNA binding proteins, it binds directly near the 3'-end of the 23S rRNA, where it nucleates assembly of the 50S subunit. The polypeptide is Large ribosomal subunit protein uL3 (Shewanella baltica (strain OS223)).